A 511-amino-acid chain; its full sequence is Centrosomal protein CCDC61 (511 aa).

An N-acetylmethionine modification is found at Met1. Residues Met1–Pro143 are head domain. Coiled-coil stretches lie at residues Ile176–Glu203 and Ser246–Glu273. The residue at position 283 (Thr283) is a Phosphothreonine. Disordered stretches follow at residues Leu284–Arg413 and Ser429–Val476. A compositionally biased stretch (basic and acidic residues) spans Arg290–Thr302. 2 positions are modified to phosphoserine: Ser330 and Ser332. Positions Lys360–Met369 are enriched in low complexity. Ser371 and Ser374 each carry phosphoserine. Basic residues predominate over residues Ser433–Gly442. Ser446 is modified (phosphoserine). Over residues Pro449–Thr458 the composition is skewed to polar residues. Ser472 carries the phosphoserine modification.

It belongs to the CCDC61 family. As to quaternary structure, forms homodimers (via head domain). Interacts with CEP170. Interacts with PCM1 and CEP131. Binds tubulin.

The protein resides in the cytoplasm. It localises to the cytoskeleton. The protein localises to the microtubule organizing center. Its subcellular location is the centrosome. It is found in the centriolar satellite. The protein resides in the cilium basal body. Functionally, microtubule-binding centrosomal protein required for centriole cohesion, independently of the centrosome-associated protein/CEP250 and rootletin/CROCC linker. In interphase, required for anchoring microtubule at the mother centriole subdistal appendages and for centrosome positioning. During mitosis, may be involved in spindle assembly and chromatin alignment by regulating the organization of spindle microtubules into a symmetrical structure. Plays a non-essential role in ciliogenesis. This Mus musculus (Mouse) protein is Centrosomal protein CCDC61.